Consider the following 399-residue polypeptide: Arginase (399 aa).

Histidine 193, aspartate 216, histidine 218, and aspartate 220 together coordinate Mn(2+). Substrate is bound by residues 218–222 (HADIN), 229–231 (SGN), and aspartate 273. The Mn(2+) site is built by aspartate 322 and aspartate 324. Substrate is bound by residues threonine 336 and glutamate 367.

The protein belongs to the arginase family. Mn(2+) is required as a cofactor.

The protein resides in the cytoplasm. The enzyme catalyses L-arginine + H2O = urea + L-ornithine. It functions in the pathway nitrogen metabolism; urea cycle; L-ornithine and urea from L-arginine: step 1/1. In Eremothecium gossypii (strain ATCC 10895 / CBS 109.51 / FGSC 9923 / NRRL Y-1056) (Yeast), this protein is Arginase (CAR1).